Consider the following 247-residue polypeptide: 5-hydroxytryptamine receptor 2A (247 aa).

Residue lysine 1 is a topological domain, extracellular. The helical transmembrane segment at leucine 2–leucine 26 threads the bilayer. A disulfide bridge links cysteine 3 with cysteine 82. Aspartate 10 serves as a coordination point for serotonin. The DRY motif; important for ligand-induced conformation changes signature appears at aspartate 27–tyrosine 29. Residues aspartate 27–lysine 46 are Cytoplasmic-facing. A helical membrane pass occupies residues alanine 47 to leucine 70. Over glutamine 71–aspartate 87 the chain is Extracellular. Residues asparagine 88–isoleucine 113 form a helical membrane-spanning segment. Residues lysine 114–cysteine 177 lie on the Cytoplasmic side of the membrane. Residue serine 135 is modified to Phosphoserine. Residues lysine 178–isoleucine 203 form a helical membrane-spanning segment. Position 198 (asparagine 198) interacts with serotonin. A disulfide bond links cysteine 204 and cysteine 208. Topologically, residues cysteine 204–aspartate 211 are extracellular. The chain crosses the membrane as a helical span at residues valine 212–leucine 237. Positions asparagine 231–tyrosine 235 match the NPxxY motif; important for ligand-induced conformation changes and signaling motif. At phenylalanine 238 to alanine 247 the chain is on the cytoplasmic side.

It belongs to the G-protein coupled receptor 1 family. In terms of assembly, interacts (via C-terminus) with MPDZ and PATJ. May interact (via C-terminus) with MPP3, PRDX6, DLG4, DLG1, CASK, APBA1 and MAGI2. Interacts with GRM2 and DRD2; this may affect signaling. In terms of tissue distribution, detected in adult intestine, especially in mucosal epithelium, longitudinal and circular layers of muscularis externa and myenteric plexuses. Highly expressed in Paneth cells, and detected at lower levels in enterocytes (at protein level).

Its subcellular location is the cell membrane. The protein localises to the cell projection. The protein resides in the dendrite. It localises to the axon. It is found in the cytoplasmic vesicle. Its subcellular location is the membrane. The protein localises to the caveola. The protein resides in the presynapse. With respect to regulation, G-protein coupled receptor activity is regulated by lipids: oleamide increases HTR2A-mediated activity. Functionally, G-protein coupled receptor for 5-hydroxytryptamine (serotonin). Also functions as a receptor for various drugs and psychoactive substances, including mescaline, psilocybin, 1-(2,5-dimethoxy-4-iodophenyl)-2-aminopropane (DOI) and lysergic acid diethylamide (LSD). Ligand binding causes a conformation change that triggers signaling via guanine nucleotide-binding proteins (G proteins) and modulates the activity of downstream effectors. HTR2A is coupled to G(q)/G(11) G alpha proteins and activates phospholipase C-beta, releasing diacylglycerol (DAG) and inositol 1,4,5-trisphosphate (IP3) second messengers that modulate the activity of phosphatidylinositol 3-kinase and promote the release of Ca(2+) ions from intracellular stores, respectively. Beta-arrestin family members inhibit signaling via G proteins and mediate activation of alternative signaling pathways. Affects neural activity, perception, cognition and mood. Plays a role in the regulation of behavior, including responses to anxiogenic situations and psychoactive substances. Plays a role in intestinal smooth muscle contraction, and may play a role in arterial vasoconstriction. The polypeptide is 5-hydroxytryptamine receptor 2A (HTR2A) (Cavia porcellus (Guinea pig)).